The sequence spans 206 residues: MLSNLMSWQITLQIALAAAVIGYLLGSIPFGLILTRAAGLGDVRSIGSGNIGATNVLRTGNRKLAAATLLLDALKASAAAWIVGYFLGEEAAIIAGFFAFIGHLFPVWIGFKGGKGVATYIGTLLGVAPIMVVLFAAVWLAVAVTTRYSSLSALVAMLVIPVALLILGNEKVAAVMAIMTVISYWKHRANISRLMGGTESKIGAKG.

Helical transmembrane passes span 14 to 34, 67 to 87, 91 to 111, 124 to 144, and 148 to 168; these read IALA…GLIL, ATLL…GYFL, AAII…WIGF, LLGV…AVAV, and YSSL…LILG.

It belongs to the PlsY family. As to quaternary structure, probably interacts with PlsX.

It is found in the cell inner membrane. The enzyme catalyses an acyl phosphate + sn-glycerol 3-phosphate = a 1-acyl-sn-glycero-3-phosphate + phosphate. The protein operates within lipid metabolism; phospholipid metabolism. Catalyzes the transfer of an acyl group from acyl-phosphate (acyl-PO(4)) to glycerol-3-phosphate (G3P) to form lysophosphatidic acid (LPA). This enzyme utilizes acyl-phosphate as fatty acyl donor, but not acyl-CoA or acyl-ACP. The protein is Glycerol-3-phosphate acyltransferase of Rhizobium etli (strain ATCC 51251 / DSM 11541 / JCM 21823 / NBRC 15573 / CFN 42).